The chain runs to 219 residues: Probable nicotinate-nucleotide adenylyltransferase (219 aa).

This sequence belongs to the NadD family.

The enzyme catalyses nicotinate beta-D-ribonucleotide + ATP + H(+) = deamido-NAD(+) + diphosphate. It participates in cofactor biosynthesis; NAD(+) biosynthesis; deamido-NAD(+) from nicotinate D-ribonucleotide: step 1/1. In terms of biological role, catalyzes the reversible adenylation of nicotinate mononucleotide (NaMN) to nicotinic acid adenine dinucleotide (NaAD). This Pseudoalteromonas atlantica (strain T6c / ATCC BAA-1087) protein is Probable nicotinate-nucleotide adenylyltransferase.